The primary structure comprises 362 residues: Phosphatidylserine decarboxylase proenzyme (362 aa).

The chain crosses the membrane as a helical span at residues Tyr26 to Tyr44. Residues Asp147, His206, and Ser316 each act as charge relay system; for autoendoproteolytic cleavage activity in the active site. Ser316 serves as the catalytic Schiff-base intermediate with substrate; via pyruvic acid; for decarboxylase activity. Ser316 is subject to Pyruvic acid (Ser); by autocatalysis.

This sequence belongs to the phosphatidylserine decarboxylase family. PSD-B subfamily. Eukaryotic type I sub-subfamily. Heterodimer of a large membrane-associated beta subunit and a small pyruvoyl-containing alpha subunit. Pyruvate is required as a cofactor. Post-translationally, is synthesized initially as an inactive proenzyme. Formation of the active enzyme involves a self-maturation process in which the active site pyruvoyl group is generated from an internal serine residue via an autocatalytic post-translational modification. Two non-identical subunits are generated from the proenzyme in this reaction, and the pyruvate is formed at the N-terminus of the alpha chain, which is derived from the carboxyl end of the proenzyme. The autoendoproteolytic cleavage occurs by a canonical serine protease mechanism, in which the side chain hydroxyl group of the serine supplies its oxygen atom to form the C-terminus of the beta chain, while the remainder of the serine residue undergoes an oxidative deamination to produce ammonia and the pyruvoyl prosthetic group on the alpha chain. During this reaction, the Ser that is part of the protease active site of the proenzyme becomes the pyruvoyl prosthetic group, which constitutes an essential element of the active site of the mature decarboxylase.

The protein resides in the endoplasmic reticulum membrane. The catalysed reaction is a 1,2-diacyl-sn-glycero-3-phospho-L-serine + H(+) = a 1,2-diacyl-sn-glycero-3-phosphoethanolamine + CO2. It functions in the pathway phospholipid metabolism; phosphatidylethanolamine biosynthesis; phosphatidylethanolamine from CDP-diacylglycerol: step 2/2. Catalyzes the formation of phosphatidylethanolamine (PtdEtn) from phosphatidylserine (PtdSer). Plays a central role in phospholipid metabolism and in the interorganelle trafficking of phosphatidylserine. This chain is Phosphatidylserine decarboxylase proenzyme, found in Plasmodium falciparum.